Consider the following 289-residue polypeptide: ATP synthase gamma chain (289 aa).

It belongs to the ATPase gamma chain family. In terms of assembly, F-type ATPases have 2 components, CF(1) - the catalytic core - and CF(0) - the membrane proton channel. CF(1) has five subunits: alpha(3), beta(3), gamma(1), delta(1), epsilon(1). CF(0) has three main subunits: a, b and c.

The protein resides in the cell inner membrane. Produces ATP from ADP in the presence of a proton gradient across the membrane. The gamma chain is believed to be important in regulating ATPase activity and the flow of protons through the CF(0) complex. The chain is ATP synthase gamma chain from Coxiella burnetii (strain CbuG_Q212) (Coxiella burnetii (strain Q212)).